The primary structure comprises 728 residues: FAS1 domain-containing protein fsc1 (728 aa).

The first 21 residues, 1–21 (MNLQFRLYLLFILLFISFANG), serve as a signal peptide directing secretion. Residues 22–670 (KNEYEDKSTS…TKRQNRWRIT (649 aa)) lie on the Vacuolar side of the membrane. FAS1 domains are found at residues 29–151 (STSI…DNII) and 154–285 (PPPA…SSLI). Asn-89 carries N-linked (GlcNAc...) asparagine glycosylation. N-linked (GlcNAc...) asparagine glycans are attached at residues Asn-404 and Asn-501. The helical transmembrane segment at 671–691 (FISISGLLLSVGICVLCYKIY) threads the bilayer. Residues 692–728 (FKFFRNRFMNQGEREPLLAPADSDTMAGRRNSSSLSV) lie on the Cytoplasmic side of the membrane.

It is found in the vacuole membrane. In terms of biological role, required for the fusion of autophagosomes with the vacuole. This is FAS1 domain-containing protein fsc1 (fsc1) from Schizosaccharomyces pombe (strain 972 / ATCC 24843) (Fission yeast).